We begin with the raw amino-acid sequence, 325 residues long: Tetraacyldisaccharide 4'-kinase (325 aa).

55–62 (TAGGNGKT) contributes to the ATP binding site.

The protein belongs to the LpxK family.

The catalysed reaction is a lipid A disaccharide + ATP = a lipid IVA + ADP + H(+). It participates in glycolipid biosynthesis; lipid IV(A) biosynthesis; lipid IV(A) from (3R)-3-hydroxytetradecanoyl-[acyl-carrier-protein] and UDP-N-acetyl-alpha-D-glucosamine: step 6/6. Transfers the gamma-phosphate of ATP to the 4'-position of a tetraacyldisaccharide 1-phosphate intermediate (termed DS-1-P) to form tetraacyldisaccharide 1,4'-bis-phosphate (lipid IVA). The sequence is that of Tetraacyldisaccharide 4'-kinase from Salmonella paratyphi A (strain ATCC 9150 / SARB42).